Consider the following 70-residue polypeptide: Translational regulator CsrA (70 aa).

This sequence belongs to the CsrA/RsmA family. Homodimer; the beta-strands of each monomer intercalate to form a hydrophobic core, while the alpha-helices form wings that extend away from the core.

Its subcellular location is the cytoplasm. In terms of biological role, a key translational regulator that binds mRNA to regulate translation initiation and/or mRNA stability. Mediates global changes in gene expression, shifting from rapid growth to stress survival by linking envelope stress, the stringent response and the catabolite repression systems. Usually binds in the 5'-UTR; binding at or near the Shine-Dalgarno sequence prevents ribosome-binding, repressing translation, binding elsewhere in the 5'-UTR can activate translation and/or stabilize the mRNA. Its function is antagonized by small RNA(s). The chain is Translational regulator CsrA from Hydrogenovibrio crunogenus (strain DSM 25203 / XCL-2) (Thiomicrospira crunogena).